The following is a 180-amino-acid chain: Large ribosomal subunit protein uL5 (180 aa).

Belongs to the universal ribosomal protein uL5 family. Part of the 50S ribosomal subunit; part of the 5S rRNA/L5/L18/L25 subcomplex. Contacts the 5S rRNA and the P site tRNA. Forms a bridge to the 30S subunit in the 70S ribosome.

Its function is as follows. This is one of the proteins that bind and probably mediate the attachment of the 5S RNA into the large ribosomal subunit, where it forms part of the central protuberance. In the 70S ribosome it contacts protein S13 of the 30S subunit (bridge B1b), connecting the 2 subunits; this bridge is implicated in subunit movement. Contacts the P site tRNA; the 5S rRNA and some of its associated proteins might help stabilize positioning of ribosome-bound tRNAs. This is Large ribosomal subunit protein uL5 from Chloroflexus aurantiacus (strain ATCC 29364 / DSM 637 / Y-400-fl).